An 84-amino-acid polypeptide reads, in one-letter code: uncharacterized protein (84 aa).

The next 3 helical transmembrane spans lie at 8–28 (IYFF…VNLL), 30–50 (INVI…ISTI), and 63–83 (VLFM…LYIP).

It localises to the cell membrane. This is an uncharacterized protein from Methanocaldococcus jannaschii (strain ATCC 43067 / DSM 2661 / JAL-1 / JCM 10045 / NBRC 100440) (Methanococcus jannaschii).